A 314-amino-acid chain; its full sequence is MSSALPDVSVTDLTHSLSPLQWVGMQGIDLPVRIEEPTYQRELHARADVQVDLPAPHVKGIHMSRLYCLLDAWGQAAAVSPASLFALLQEMIDSHQDCGSRNARLRLDFDLLVRRPALVTEGLSGWKSYSVHVLATKVGGALNLSIEVRIGYSSTCPCSAALSRQLIEDGFLRTFKDQPLLEASAVAQWLRSNASLATPHSQRSEARVRVTVPSDAPDLGLLALIDQVEGALRTPVQTAVKRADEQAFAALNGQNLMFVEDAARRIQASLRGYRDSQVHVRHLESLHPHDASAWSAPQASAPDQQESFATGNER.

Residues 290–314 (DASAWSAPQASAPDQQESFATGNER) form a disordered region. The segment covering 291 to 305 (ASAWSAPQASAPDQQ) has biased composition (low complexity).

Belongs to the GTP cyclohydrolase IV family.

It catalyses the reaction GTP + H2O = 7,8-dihydroneopterin 3'-triphosphate + formate + H(+). It functions in the pathway cofactor biosynthesis; 7,8-dihydroneopterin triphosphate biosynthesis; 7,8-dihydroneopterin triphosphate from GTP: step 1/1. Its function is as follows. Converts GTP to 7,8-dihydroneopterin triphosphate. In Pseudomonas putida (strain ATCC 700007 / DSM 6899 / JCM 31910 / BCRC 17059 / LMG 24140 / F1), this protein is GTP cyclohydrolase FolE2.